The primary structure comprises 101 residues: Urease subunit beta (101 aa).

Belongs to the urease beta subunit family. In terms of assembly, heterotrimer of UreA (gamma), UreB (beta) and UreC (alpha) subunits. Three heterotrimers associate to form the active enzyme.

The protein resides in the cytoplasm. It carries out the reaction urea + 2 H2O + H(+) = hydrogencarbonate + 2 NH4(+). It functions in the pathway nitrogen metabolism; urea degradation; CO(2) and NH(3) from urea (urease route): step 1/1. The polypeptide is Urease subunit beta (Paraburkholderia phytofirmans (strain DSM 17436 / LMG 22146 / PsJN) (Burkholderia phytofirmans)).